The chain runs to 451 residues: 2,4-dinitrotoluene dioxygenase system, large oxygenase component (451 aa).

A Rieske domain is found at 42 to 126 (WLFLTHDSLI…LQSVPFEKEL (85 aa)). [2Fe-2S] cluster contacts are provided by Cys-84, His-86, Cys-104, and His-107. Fe cation-binding residues include His-211, His-216, and Asp-365.

This sequence belongs to the bacterial ring-hydroxylating dioxygenase alpha subunit family. The 2,4-dinitrotoluene dioxygenase (DNTDO) multicomponent enzyme system is composed of an electron transfer component and a dioxygenase component (iron sulfur protein (ISP)). The electron transfer component is composed of a ferredoxin reductase (DntAa) and a ferredoxin (DntAb), and the dioxygenase component is formed of a large alpha subunit (DntAc) and a small beta subunit (DntAd). It depends on [2Fe-2S] cluster as a cofactor. Requires Fe(2+) as cofactor.

The catalysed reaction is 2,4-dinitrotoluene + NADH + O2 = 4-methyl-5-nitrocatechol + nitrite + NAD(+). Functionally, component of the 2,4-dinitrotoluene dioxygenase (DNTDO) multicomponent enzyme system which catalyzes the incorporation of both atoms of molecular oxygen into 2,4-dinitrotoluene (DNT) to form 4-methyl-5-nitrocatechol (MNC) and nitrite. The alpha subunit has a catalytic role in the holoenzyme. Also able to convert naphthalene to cis-(1R,2S)-dihydroxy-1,2-dihydronaphthalene. The chain is 2,4-dinitrotoluene dioxygenase system, large oxygenase component from Burkholderia sp. (strain RASC).